Here is a 169-residue protein sequence, read N- to C-terminus: Endoribonuclease YbeY (169 aa).

3 residues coordinate Zn(2+): histidine 117, histidine 121, and histidine 127.

Belongs to the endoribonuclease YbeY family. Zn(2+) serves as cofactor.

The protein localises to the cytoplasm. Single strand-specific metallo-endoribonuclease involved in late-stage 70S ribosome quality control and in maturation of the 3' terminus of the 16S rRNA. This chain is Endoribonuclease YbeY, found in Mesoplasma florum (strain ATCC 33453 / NBRC 100688 / NCTC 11704 / L1) (Acholeplasma florum).